A 340-amino-acid chain; its full sequence is GTPase Obg (340 aa).

The region spanning 1–159 (MGFIDEVKLC…KHVLLKLKVL (159 aa)) is the Obg domain. The OBG-type G domain occupies 160 to 329 (SDVGIIGMPN…LSEKLKKSNS (170 aa)). GTP contacts are provided by residues 166-173 (GMPNAGKS), 191-195 (FTTVR), 212-215 (DIPG), 279-282 (NKCD), and 310-312 (NGD). Mg(2+)-binding residues include serine 173 and threonine 193.

The protein belongs to the TRAFAC class OBG-HflX-like GTPase superfamily. OBG GTPase family. In terms of assembly, monomer. It depends on Mg(2+) as a cofactor.

The protein localises to the cytoplasm. Its function is as follows. An essential GTPase which binds GTP, GDP and possibly (p)ppGpp with moderate affinity, with high nucleotide exchange rates and a fairly low GTP hydrolysis rate. Plays a role in control of the cell cycle, stress response, ribosome biogenesis and in those bacteria that undergo differentiation, in morphogenesis control. The sequence is that of GTPase Obg from Wolbachia pipientis wMel.